A 72-amino-acid polypeptide reads, in one-letter code: Cytochrome c oxidase subunit 2 (72 aa).

The Mitochondrial intermembrane segment spans residues 1–14 (MAHPSQLGFQDAAS). A helical transmembrane segment spans residues 15 to 45 (PVMEELLHFHDHALMIVFLISTLVLYIIVAM). The Mitochondrial matrix segment spans residues 46–72 (VSTKLTNKHILDSQEVEIVWTILPAVI).

Belongs to the cytochrome c oxidase subunit 2 family. Component of the cytochrome c oxidase (complex IV, CIV), a multisubunit enzyme composed of 14 subunits. The complex is composed of a catalytic core of 3 subunits MT-CO1, MT-CO2 and MT-CO3, encoded in the mitochondrial DNA, and 11 supernumerary subunits COX4I, COX5A, COX5B, COX6A, COX6B, COX6C, COX7A, COX7B, COX7C, COX8 and NDUFA4, which are encoded in the nuclear genome. The complex exists as a monomer or a dimer and forms supercomplexes (SCs) in the inner mitochondrial membrane with NADH-ubiquinone oxidoreductase (complex I, CI) and ubiquinol-cytochrome c oxidoreductase (cytochrome b-c1 complex, complex III, CIII), resulting in different assemblies (supercomplex SCI(1)III(2)IV(1) and megacomplex MCI(2)III(2)IV(2)). Found in a complex with TMEM177, COA6, COX18, COX20, SCO1 and SCO2. Interacts with TMEM177 in a COX20-dependent manner. Interacts with COX20. Interacts with COX16. It depends on Cu cation as a cofactor.

The protein localises to the mitochondrion inner membrane. The enzyme catalyses 4 Fe(II)-[cytochrome c] + O2 + 8 H(+)(in) = 4 Fe(III)-[cytochrome c] + 2 H2O + 4 H(+)(out). Functionally, component of the cytochrome c oxidase, the last enzyme in the mitochondrial electron transport chain which drives oxidative phosphorylation. The respiratory chain contains 3 multisubunit complexes succinate dehydrogenase (complex II, CII), ubiquinol-cytochrome c oxidoreductase (cytochrome b-c1 complex, complex III, CIII) and cytochrome c oxidase (complex IV, CIV), that cooperate to transfer electrons derived from NADH and succinate to molecular oxygen, creating an electrochemical gradient over the inner membrane that drives transmembrane transport and the ATP synthase. Cytochrome c oxidase is the component of the respiratory chain that catalyzes the reduction of oxygen to water. Electrons originating from reduced cytochrome c in the intermembrane space (IMS) are transferred via the dinuclear copper A center (CU(A)) of subunit 2 and heme A of subunit 1 to the active site in subunit 1, a binuclear center (BNC) formed by heme A3 and copper B (CU(B)). The BNC reduces molecular oxygen to 2 water molecules using 4 electrons from cytochrome c in the IMS and 4 protons from the mitochondrial matrix. This chain is Cytochrome c oxidase subunit 2 (mt-co2), found in Atractosteus spatula (Alligator gar).